A 425-amino-acid chain; its full sequence is Ribosomal protein uS12 methylthiotransferase RimO (425 aa).

One can recognise an MTTase N-terminal domain in the interval 2 to 115; it reads KNFTVITLGC…IIDYIKQFSK (114 aa). Positions 11, 47, 78, 142, 146, and 149 each coordinate [4Fe-4S] cluster. The region spanning 128–357 is the Radical SAM core domain; sequence VEPPSYRYIK…MARQAVISLE (230 aa). In terms of domain architecture, TRAM spans 360–425; the sequence is RALIGKKYEA…YEYDVKGVIV (66 aa).

This sequence belongs to the methylthiotransferase family. RimO subfamily. Requires [4Fe-4S] cluster as cofactor.

It is found in the cytoplasm. It catalyses the reaction L-aspartate(89)-[ribosomal protein uS12]-hydrogen + (sulfur carrier)-SH + AH2 + 2 S-adenosyl-L-methionine = 3-methylsulfanyl-L-aspartate(89)-[ribosomal protein uS12]-hydrogen + (sulfur carrier)-H + 5'-deoxyadenosine + L-methionine + A + S-adenosyl-L-homocysteine + 2 H(+). Catalyzes the methylthiolation of an aspartic acid residue of ribosomal protein uS12. The protein is Ribosomal protein uS12 methylthiotransferase RimO of Thermodesulfovibrio yellowstonii (strain ATCC 51303 / DSM 11347 / YP87).